A 572-amino-acid chain; its full sequence is Alpha-1D adrenergic receptor (572 aa).

The segment at 1-77 is disordered; the sequence is MTFRDLLSVS…SAGEPGSAGA (77 aa). At 1–95 the chain is on the extracellular side; that stretch reads MTFRDLLSVS…AVGGLVVSAQ (95 aa). Composition is skewed to gly residues over residues 23–33 and 42–61; these read SSAGGGGGSAG and AVGG…GAGS. 2 N-linked (GlcNAc...) asparagine glycosylation sites follow: asparagine 65 and asparagine 82. The helical transmembrane segment at 96 to 121 threads the bilayer; sequence GVGVGVFLAAFILMAVAGNLLVILSV. The Cytoplasmic portion of the chain corresponds to 122–133; sequence ACNRHLQTVTNY. Residues 134–159 traverse the membrane as a helical segment; it reads FIVNLAVADLLLSATVLPFSATMEVL. The Extracellular segment spans residues 160–169; that stretch reads GFWAFGRAFC. Residues 170–192 traverse the membrane as a helical segment; it reads DVWAAVDVLCCTASILSLCTISV. Over 193-213 the chain is Cytoplasmic; sequence DRYVGVRHSLKYPAIMTERKA. Residues 214 to 238 form a helical membrane-spanning segment; it reads AAILALLWVVALVVSVGPLLGWKEP. Over 239–251 the chain is Extracellular; the sequence is VPPDERFCGITEE. A helical transmembrane segment spans residues 252 to 275; it reads AGYAVFSSVCSFYLPMAVIVVMYC. Residues 276–348 lie on the Cytoplasmic side of the membrane; it reads RVYVVARSTT…KFSREKKAAK (73 aa). Residues 349-373 traverse the membrane as a helical segment; it reads TLAIVVGVFVLCWFPFFFVLPLGSL. The Extracellular portion of the chain corresponds to 374 to 380; the sequence is FPQLKPS. A helical transmembrane segment spans residues 381-405; it reads EGVFKVIFWLGYFNSCVNPLIYPCS. Topologically, residues 406–572 are cytoplasmic; sequence SREFKRAFLR…DYSNLRETDI (167 aa). The S-palmitoyl cysteine moiety is linked to residue cysteine 419. Positions 444-488 are disordered; sequence GLRQDCAPSSGDAPPGAPLALTALPDPDPEPPGTPEMQAPVASRR. The segment covering 450 to 468 has biased composition (low complexity); the sequence is APSSGDAPPGAPLALTALP.

Belongs to the G-protein coupled receptor 1 family. Adrenergic receptor subfamily. ADRA1D sub-subfamily. Interacts with FLNA (via filamin repeat 21); increases PKA-mediated phosphorylation of FLNA. Palmitoylated. Palmitoylation by ZDHHC21 may increase the expression of the receptor and regulate downstream signaling.

It localises to the cell membrane. Its function is as follows. This alpha-adrenergic receptor mediates its effect through the influx of extracellular calcium. In Homo sapiens (Human), this protein is Alpha-1D adrenergic receptor (ADRA1D).